A 271-amino-acid polypeptide reads, in one-letter code: Tryptophan synthase alpha chain (271 aa).

Residues Glu49 and Asp60 each act as proton acceptor in the active site.

This sequence belongs to the TrpA family. As to quaternary structure, tetramer of two alpha and two beta chains.

It carries out the reaction (1S,2R)-1-C-(indol-3-yl)glycerol 3-phosphate + L-serine = D-glyceraldehyde 3-phosphate + L-tryptophan + H2O. It participates in amino-acid biosynthesis; L-tryptophan biosynthesis; L-tryptophan from chorismate: step 5/5. Functionally, the alpha subunit is responsible for the aldol cleavage of indoleglycerol phosphate to indole and glyceraldehyde 3-phosphate. The protein is Tryptophan synthase alpha chain of Buchnera aphidicola subsp. Schizaphis graminum (strain Sg).